Consider the following 63-residue polypeptide: Large ribosomal subunit protein bL28 (63 aa).

This sequence belongs to the bacterial ribosomal protein bL28 family.

The sequence is that of Large ribosomal subunit protein bL28 from Beutenbergia cavernae (strain ATCC BAA-8 / DSM 12333 / CCUG 43141 / JCM 11478 / NBRC 16432 / NCIMB 13614 / HKI 0122).